The following is a 152-amino-acid chain: Putative superoxide dismutase [Cu-Zn] (152 aa).

The Cu cation site is built by His43, His45, and His60. Cys54 and Cys144 form a disulfide bridge. Zn(2+)-binding residues include His60, His68, His77, and Asp80. Position 118 (His118) interacts with Cu cation.

This sequence belongs to the Cu-Zn superoxide dismutase family. It depends on Cu cation as a cofactor. The cofactor is Zn(2+).

It carries out the reaction 2 superoxide + 2 H(+) = H2O2 + O2. Functionally, destroys radicals which are normally produced within the cells and which are toxic to biological systems. The sequence is that of Putative superoxide dismutase [Cu-Zn] (SOD) from Orgyia pseudotsugata (Douglas-fir tussock moth).